Here is a 433-residue protein sequence, read N- to C-terminus: Enolase (433 aa).

Gln-167 contacts (2R)-2-phosphoglycerate. The Proton donor role is filled by Glu-209. 3 residues coordinate Mg(2+): Asp-246, Glu-291, and Asp-318. (2R)-2-phosphoglycerate is bound by residues Lys-343, Arg-372, Ser-373, and Lys-394. The Proton acceptor role is filled by Lys-343.

Belongs to the enolase family. As to quaternary structure, component of the RNA degradosome, a multiprotein complex involved in RNA processing and mRNA degradation. It depends on Mg(2+) as a cofactor.

Its subcellular location is the cytoplasm. The protein localises to the secreted. It is found in the cell surface. It carries out the reaction (2R)-2-phosphoglycerate = phosphoenolpyruvate + H2O. The protein operates within carbohydrate degradation; glycolysis; pyruvate from D-glyceraldehyde 3-phosphate: step 4/5. In terms of biological role, catalyzes the reversible conversion of 2-phosphoglycerate (2-PG) into phosphoenolpyruvate (PEP). It is essential for the degradation of carbohydrates via glycolysis. This is Enolase from Vibrio vulnificus (strain YJ016).